A 481-amino-acid polypeptide reads, in one-letter code: UDP-glucose 6-dehydrogenase (481 aa).

Residues 16-21 (GAGYVG), Asp41, Lys46, 94-98 (VNTPT), 135-136 (ST), and Glu172 each bind NAD(+). Substrate-binding positions include 168–172 (EFLAE), 227–231 (KLVAN), Arg267, and 274–280 (QASVGFG). Residue Cys283 is the Nucleophile of the active site. 283–286 (CFQK) contributes to the NAD(+) binding site. 345–346 (FK) lines the substrate pocket. An NAD(+)-binding site is contributed by Arg353. Arg447 contacts substrate.

It belongs to the UDP-glucose/GDP-mannose dehydrogenase family. In terms of tissue distribution, expressed in the vulva and in oocytes.

The enzyme catalyses UDP-alpha-D-glucose + 2 NAD(+) + H2O = UDP-alpha-D-glucuronate + 2 NADH + 3 H(+). It functions in the pathway nucleotide-sugar biosynthesis; UDP-alpha-D-glucuronate biosynthesis; UDP-alpha-D-glucuronate from UDP-alpha-D-glucose: step 1/1. Involved in the biosynthesis of glycosaminoglycans; hyaluronan, chondroitin sulfate, and heparan sulfate. In Caenorhabditis elegans, this protein is UDP-glucose 6-dehydrogenase (sqv-4).